A 381-amino-acid polypeptide reads, in one-letter code: 1-deoxy-D-xylulose 5-phosphate reductoisomerase (381 aa).

The NADPH site is built by Thr-10, Gly-11, Ser-12, Ile-13, Asn-38, and Asn-121. Position 122 (Lys-122) interacts with 1-deoxy-D-xylulose 5-phosphate. Glu-123 lines the NADPH pocket. Position 147 (Asp-147) interacts with Mn(2+). Residues Ser-148, Glu-149, Ser-173, and His-196 each coordinate 1-deoxy-D-xylulose 5-phosphate. Glu-149 lines the Mn(2+) pocket. Gly-202 contributes to the NADPH binding site. 1-deoxy-D-xylulose 5-phosphate-binding residues include Ser-209, Asn-214, Lys-215, and Glu-218. Position 218 (Glu-218) interacts with Mn(2+).

It belongs to the DXR family. Mg(2+) serves as cofactor. Mn(2+) is required as a cofactor.

It catalyses the reaction 2-C-methyl-D-erythritol 4-phosphate + NADP(+) = 1-deoxy-D-xylulose 5-phosphate + NADPH + H(+). The protein operates within isoprenoid biosynthesis; isopentenyl diphosphate biosynthesis via DXP pathway; isopentenyl diphosphate from 1-deoxy-D-xylulose 5-phosphate: step 1/6. Catalyzes the NADPH-dependent rearrangement and reduction of 1-deoxy-D-xylulose-5-phosphate (DXP) to 2-C-methyl-D-erythritol 4-phosphate (MEP). This chain is 1-deoxy-D-xylulose 5-phosphate reductoisomerase, found in Alkaliphilus oremlandii (strain OhILAs) (Clostridium oremlandii (strain OhILAs)).